A 166-amino-acid chain; its full sequence is Ribosome maturation factor RimM (166 aa).

The PRC barrel domain maps to E90–L163.

It belongs to the RimM family. Binds ribosomal protein uS19.

The protein localises to the cytoplasm. Functionally, an accessory protein needed during the final step in the assembly of 30S ribosomal subunit, possibly for assembly of the head region. Essential for efficient processing of 16S rRNA. May be needed both before and after RbfA during the maturation of 16S rRNA. It has affinity for free ribosomal 30S subunits but not for 70S ribosomes. The chain is Ribosome maturation factor RimM from Oenococcus oeni (strain ATCC BAA-331 / PSU-1).